Reading from the N-terminus, the 176-residue chain is Inorganic pyrophosphatase (176 aa).

Substrate-binding residues include K30, R44, and Y56. Mg(2+) is bound by residues D66, D71, and D103. Y142 contacts substrate.

It belongs to the PPase family. In terms of assembly, homohexamer. Mg(2+) is required as a cofactor.

It localises to the cytoplasm. The catalysed reaction is diphosphate + H2O = 2 phosphate + H(+). In terms of biological role, catalyzes the hydrolysis of inorganic pyrophosphate (PPi) forming two phosphate ions. This Escherichia coli O157:H7 protein is Inorganic pyrophosphatase.